The following is a 212-amino-acid chain: Transmembrane protein 65 (212 aa).

The Cytoplasmic portion of the chain corresponds to 1 to 88 (MIRSVLLRAL…SRLTAAQLRY (88 aa)). Residues 89–109 (ILLHNAIPFIGFGFLDNAIMI) form a helical membrane-spanning segment. The Extracellular portion of the chain corresponds to 110 to 116 (AAGTQIE). The chain crosses the membrane as a helical span at residues 117-137 (LSIGLTLGISTMAAAALGNLV). Topologically, residues 138-139 (SD) are cytoplasmic. Residues 140–160 (LAGLGLAGYVEALAVRLGMQI) form a helical membrane-spanning segment. Topologically, residues 161–178 (PDLSPRQVDMWQTRVSSH) are extracellular. Residues 179-199 (MGKAIGVAIGCILGMFPLLFL) form a helical membrane-spanning segment. Residues 200–212 (SDEEDKKPKKDSN) are Cytoplasmic-facing.

In terms of assembly, monomer. Homodimer. Interacts with GJA1. In terms of tissue distribution, expression is restricted to the heart (at protein level).

It localises to the cell membrane. The protein resides in the mitochondrion inner membrane. In terms of biological role, essential for maintaining proper cardiac intercalated disk (ICD) structure and function. May regulate cardiac conduction and the function of the gap junction protein GJA1. May contribute to the stability and proper localization of GJA1 to cardiac intercalated disk thereby regulating gap junction communication. Regulates mitochondrial respiration and mitochondrial DNA copy number maintenance. In Danio rerio (Zebrafish), this protein is Transmembrane protein 65 (tmem65).